The primary structure comprises 139 residues: Small ribosomal subunit protein uS11 (139 aa).

Disordered stretches follow at residues 1–33 (MPPA…AAHI) and 118–139 (GAIS…RRRV). Residues 14 to 23 (KGQKTRRREK) are compositionally biased toward basic residues.

Belongs to the universal ribosomal protein uS11 family. As to quaternary structure, part of the 30S ribosomal subunit. Interacts with proteins S7 and S18. Binds to IF-3.

Functionally, located on the platform of the 30S subunit, it bridges several disparate RNA helices of the 16S rRNA. Forms part of the Shine-Dalgarno cleft in the 70S ribosome. The protein is Small ribosomal subunit protein uS11 of Mycobacterium tuberculosis (strain ATCC 25177 / H37Ra).